Here is a 1227-residue protein sequence, read N- to C-terminus: Protein transport protein Sec31A (1227 aa).

WD repeat units follow at residues Lys4–Glu47, Ser64–Thr111, Lys120–Thr160, Gln166–Lys206, Asp209–Arg254, Ser258–Glu298, and Thr301–Arg342. One copy of the WD 8; interaction with SEC13 repeat lies at Ser397–Ser430. 3 disordered regions span residues Glu804–Ala875, Gln905–Asp1008, and Ala1040–Tyr1075. Residues Gln905–Pro924 show a composition bias toward low complexity. Over residues Pro925 to Ser945 the composition is skewed to pro residues. A compositionally biased stretch (polar residues) spans Pro995–Trp1006. The span at Ala1040–Pro1049 shows a compositional bias: low complexity. Positions Pro1057–Gln1069 are enriched in polar residues.

This sequence belongs to the WD repeat SEC31 family. As to quaternary structure, COPII is composed of at least 5 proteins: the SEC23/24 complex, the SEC13/31 complex and SAR1. SEC13 and SEC31 make a 2:2 tetramer that forms the edge element of the COPII outer coat. The tetramer self-assembles in multiple copies to form the complete polyhedral cage. Interacts (via WD 8) with SEC13.

Its subcellular location is the cytoplasm. The protein resides in the cytoplasmic vesicle. It is found in the COPII-coated vesicle membrane. It localises to the endoplasmic reticulum membrane. Its function is as follows. Component of the coat protein complex II (COPII) which promotes the formation of transport vesicles from the endoplasmic reticulum (ER). The coat has two main functions, the physical deformation of the endoplasmic reticulum membrane into vesicles and the selection of cargo molecules. The sequence is that of Protein transport protein Sec31A (SEC31A) from Gallus gallus (Chicken).